The following is a 194-amino-acid chain: Mitochondrial import inner membrane translocase subunit Tim22 (194 aa).

Cystine bridges form between Cys-69-Cys-141 and Cys-160-Cys-179. Transmembrane regions (helical) follow at residues 74–94 (VLAC…TAGI), 123–143 (MSYA…ECLV), and 170–190 (AGVK…AAID).

This sequence belongs to the Tim17/Tim22/Tim23 family. Component of the TIM22 complex, whose core is composed of TIMM22, associated with peripheral protein FXC1/TIMM10B and the 70 kDa heterohexamer. In most cases, the 70 kDa complex is composed of TIMM9 and TIMM10 (TIMM10A or TIMM10B). A small fraction of the 70 kDa complex is composed of TIMM8 (TIMM8A/DDP1 or TIMM8B/DDP2) and TIMM13. The TIM22 complex also contains AGK and TIMM29. Interacts directly with TIMM9, TIMM10A and FXC1/TIMM10B. Interacts (when oxidized) with TIMM29; interaction is direct. Disulfide bonds promote efficient assembly of the TIM22 complex.

The protein localises to the mitochondrion inner membrane. In terms of biological role, essential core component of the TIM22 complex, a complex that mediates the import and insertion of multi-pass transmembrane proteins into the mitochondrial inner membrane. In the TIM22 complex, it constitutes the voltage-activated and signal-gated channel. Forms a twin-pore translocase that uses the membrane potential as external driving force in 2 voltage-dependent steps. The polypeptide is Mitochondrial import inner membrane translocase subunit Tim22 (Timm22) (Mus musculus (Mouse)).